The primary structure comprises 164 residues: uncharacterized protein (164 aa).

This is an uncharacterized protein from Caenorhabditis elegans.